The sequence spans 518 residues: Xylose import ATP-binding protein XylG (518 aa).

ABC transporter domains are found at residues 6–245 (LQMN…VGRE) and 262–507 (FEAR…LSHS). Position 38–45 (38–45 (GENGAGKS)) interacts with ATP.

It belongs to the ABC transporter superfamily. Xylose importer (TC 3.A.1.2.4) family. As to quaternary structure, the complex is composed of two ATP-binding proteins (XylG), two transmembrane proteins (XylH) and a solute-binding protein (XylF).

It localises to the cell inner membrane. The catalysed reaction is D-xylose(out) + ATP + H2O = D-xylose(in) + ADP + phosphate + H(+). Part of the ABC transporter complex XylFGH involved in xylose import. Responsible for energy coupling to the transport system. The sequence is that of Xylose import ATP-binding protein XylG from Pseudomonas syringae pv. syringae (strain B728a).